A 438-amino-acid chain; its full sequence is Thymidine phosphorylase (438 aa).

The protein belongs to the thymidine/pyrimidine-nucleoside phosphorylase family. As to quaternary structure, homodimer.

The enzyme catalyses thymidine + phosphate = 2-deoxy-alpha-D-ribose 1-phosphate + thymine. Its pathway is pyrimidine metabolism; dTMP biosynthesis via salvage pathway; dTMP from thymine: step 1/2. In terms of biological role, the enzymes which catalyze the reversible phosphorolysis of pyrimidine nucleosides are involved in the degradation of these compounds and in their utilization as carbon and energy sources, or in the rescue of pyrimidine bases for nucleotide synthesis. The sequence is that of Thymidine phosphorylase from Sinorhizobium fredii (strain NBRC 101917 / NGR234).